We begin with the raw amino-acid sequence, 66 residues long: Large ribosomal subunit protein bL33c (66 aa).

This sequence belongs to the bacterial ribosomal protein bL33 family.

It localises to the plastid. The protein resides in the chloroplast. The sequence is that of Large ribosomal subunit protein bL33c from Nandina domestica (Heavenly bamboo).